A 345-amino-acid chain; its full sequence is 3-isopropylmalate dehydrogenase (345 aa).

74–87 provides a ligand contact to NAD(+); it reads GPKWDGLPRKIRPE. Substrate is bound by residues arginine 94, arginine 104, arginine 132, and aspartate 217. Mg(2+) contacts are provided by aspartate 217, aspartate 241, and aspartate 245. 274 to 286 serves as a coordination point for NAD(+); sequence GSAPDIAGKGLAN.

This sequence belongs to the isocitrate and isopropylmalate dehydrogenases family. LeuB type 1 subfamily. As to quaternary structure, homodimer. Mg(2+) is required as a cofactor. Mn(2+) serves as cofactor.

It localises to the cytoplasm. It catalyses the reaction (2R,3S)-3-isopropylmalate + NAD(+) = 4-methyl-2-oxopentanoate + CO2 + NADH. It participates in amino-acid biosynthesis; L-leucine biosynthesis; L-leucine from 3-methyl-2-oxobutanoate: step 3/4. In terms of biological role, catalyzes the oxidation of 3-carboxy-2-hydroxy-4-methylpentanoate (3-isopropylmalate) to 3-carboxy-4-methyl-2-oxopentanoate. The product decarboxylates to 4-methyl-2 oxopentanoate. This Thermus thermophilus (strain ATCC BAA-163 / DSM 7039 / HB27) protein is 3-isopropylmalate dehydrogenase (leuB).